Reading from the N-terminus, the 183-residue chain is ATP synthase subunit delta (183 aa).

This sequence belongs to the ATPase delta chain family. As to quaternary structure, F-type ATPases have 2 components, F(1) - the catalytic core - and F(0) - the membrane proton channel. F(1) has five subunits: alpha(3), beta(3), gamma(1), delta(1), epsilon(1). F(0) has three main subunits: a(1), b(2) and c(10-14). The alpha and beta chains form an alternating ring which encloses part of the gamma chain. F(1) is attached to F(0) by a central stalk formed by the gamma and epsilon chains, while a peripheral stalk is formed by the delta and b chains.

It is found in the cell inner membrane. Its function is as follows. F(1)F(0) ATP synthase produces ATP from ADP in the presence of a proton or sodium gradient. F-type ATPases consist of two structural domains, F(1) containing the extramembraneous catalytic core and F(0) containing the membrane proton channel, linked together by a central stalk and a peripheral stalk. During catalysis, ATP synthesis in the catalytic domain of F(1) is coupled via a rotary mechanism of the central stalk subunits to proton translocation. In terms of biological role, this protein is part of the stalk that links CF(0) to CF(1). It either transmits conformational changes from CF(0) to CF(1) or is implicated in proton conduction. The protein is ATP synthase subunit delta of Ehrlichia canis (strain Jake).